A 232-amino-acid polypeptide reads, in one-letter code: Ion-translocating oxidoreductase complex subunit E (232 aa).

A run of 5 helical transmembrane segments spans residues 39–59, 69–89, 92–112, 125–145, and 182–202; these read LGLG…ISSL, IPIY…LINA, FGLY…CIVV, ALSA…MFVL, and PFLL…MLAV.

This sequence belongs to the NqrDE/RnfAE family. As to quaternary structure, the complex is composed of six subunits: RnfA, RnfB, RnfC, RnfD, RnfE and RnfG.

It is found in the cell inner membrane. Functionally, part of a membrane-bound complex that couples electron transfer with translocation of ions across the membrane. The protein is Ion-translocating oxidoreductase complex subunit E of Klebsiella pneumoniae (strain 342).